The chain runs to 525 residues: ALBINO3-like protein 2, chloroplastic (525 aa).

The next 4 helical transmembrane spans lie at 99 to 119 (WMII…LLIL), 167 to 187 (LWFF…MASI), 217 to 237 (FGPV…QISF), and 262 to 282 (ILSV…LVYW). TPR repeat units lie at residues 346–379 (PEEL…DPGY), 380–413 (VRGL…LLDE), 425–458 (MLAS…REPG), and 467–500 (FEAL…NPAY).

Belongs to the OXA1/ALB3/YidC (TC 2.A.9.2) family.

The protein resides in the plastid. Its subcellular location is the chloroplast thylakoid membrane. Its function is as follows. Probably required for the insertion of integral membrane proteins into the chloroplast thylakoid membranes. This is ALBINO3-like protein 2, chloroplastic (ALB3L2) from Arabidopsis thaliana (Mouse-ear cress).